We begin with the raw amino-acid sequence, 848 residues long: Leucine--tRNA ligase (848 aa).

Residues 1-16 (MCPEQPHDTRAERDEM) show a composition bias toward basic and acidic residues. A disordered region spans residues 1 to 30 (MCPEQPHDTRAERDEMSEQTQQAAQPAETA). A compositionally biased stretch (low complexity) spans 18-30 (EQTQQAAQPAETA). Residues 69–79 (PYPSGDLHMGH) carry the 'HIGH' region motif. A 'KMSKS' region motif is present at residues 614 to 618 (KMSKS). Lys-617 contributes to the ATP binding site.

Belongs to the class-I aminoacyl-tRNA synthetase family.

It localises to the cytoplasm. The catalysed reaction is tRNA(Leu) + L-leucine + ATP = L-leucyl-tRNA(Leu) + AMP + diphosphate. In Nocardioides sp. (strain ATCC BAA-499 / JS614), this protein is Leucine--tRNA ligase.